We begin with the raw amino-acid sequence, 249 residues long: 2,3-bisphosphoglycerate-dependent phosphoglycerate mutase (249 aa).

Substrate-binding positions include 8 to 15 (RHGQSAWN), 21 to 22 (TG), R60, 87 to 90 (ERHY), K98, 114 to 115 (RR), and 183 to 184 (GN). H9 functions as the Tele-phosphohistidine intermediate in the catalytic mechanism. E87 functions as the Proton donor/acceptor in the catalytic mechanism. Positions 115-137 (RSYDTPPPPLPADDPRSPAGDAR) are disordered.

The protein belongs to the phosphoglycerate mutase family. BPG-dependent PGAM subfamily. As to quaternary structure, homodimer.

It catalyses the reaction (2R)-2-phosphoglycerate = (2R)-3-phosphoglycerate. The protein operates within carbohydrate degradation; glycolysis; pyruvate from D-glyceraldehyde 3-phosphate: step 3/5. In terms of biological role, catalyzes the interconversion of 2-phosphoglycerate and 3-phosphoglycerate. This chain is 2,3-bisphosphoglycerate-dependent phosphoglycerate mutase, found in Nitratidesulfovibrio vulgaris (strain DSM 19637 / Miyazaki F) (Desulfovibrio vulgaris).